A 200-amino-acid polypeptide reads, in one-letter code: MIAKLKGLLDETGTDWAVIDVSGVGYLVHCSSKSLAALGEVGEACTVYTDLQVSENDMRLLGFAEASERDWFRLLTQVQGVGSKVALAILSALSTEEVQTACANGDAAMVARAQGVGPKLAGRIVNELKDKAGALPSAPGGAAMAANPAGGASADAVSALENLGFKPAIAARAVATAQGELGEGASESELIRVALKRAAG.

Positions 1 to 64 are domain I; the sequence is MIAKLKGLLD…ENDMRLLGFA (64 aa). The segment at 65–143 is domain II; that stretch reads EASERDWFRL…ALPSAPGGAA (79 aa). A flexible linker region spans residues 144–154; it reads MAANPAGGASA. The segment at 154–200 is domain III; sequence ADAVSALENLGFKPAIAARAVATAQGELGEGASESELIRVALKRAAG.

It belongs to the RuvA family. As to quaternary structure, homotetramer. Forms an RuvA(8)-RuvB(12)-Holliday junction (HJ) complex. HJ DNA is sandwiched between 2 RuvA tetramers; dsDNA enters through RuvA and exits via RuvB. An RuvB hexamer assembles on each DNA strand where it exits the tetramer. Each RuvB hexamer is contacted by two RuvA subunits (via domain III) on 2 adjacent RuvB subunits; this complex drives branch migration. In the full resolvosome a probable DNA-RuvA(4)-RuvB(12)-RuvC(2) complex forms which resolves the HJ.

The protein localises to the cytoplasm. In terms of biological role, the RuvA-RuvB-RuvC complex processes Holliday junction (HJ) DNA during genetic recombination and DNA repair, while the RuvA-RuvB complex plays an important role in the rescue of blocked DNA replication forks via replication fork reversal (RFR). RuvA specifically binds to HJ cruciform DNA, conferring on it an open structure. The RuvB hexamer acts as an ATP-dependent pump, pulling dsDNA into and through the RuvAB complex. HJ branch migration allows RuvC to scan DNA until it finds its consensus sequence, where it cleaves and resolves the cruciform DNA. This is Holliday junction branch migration complex subunit RuvA from Erythrobacter litoralis (strain HTCC2594).